Consider the following 502-residue polypeptide: MSELRDTRLEKARTLEELGQGPYALTFSPSHRMAELQVTHADLPKGEERDVSVSVAGRVMTRRVMGKLAFFTLADETGSIQLFLEKAGLEAQQEGWFKQITSLVDSGDWLGVSGTLRRTDRGELSVKVSDWRMLTKALQPLPDKWHGLADVEKRYRQRYLDLVVSPDSRETFRRRARLVSGIRRWLDQRDFLEIETPVLQSEPGGADARPFETHHNALDLPLTLRIATELHLKRLVVGGFERVYELGRIFRNEGVSTRHNPEFTSVEIYQAYSDYVGMMELTEQMVSAVCEEVCGTTTITYQGTEIDLAPPWRRATMHELVQDATGLDFNGFSSREEAAAAMTAKGLHAPELADSVGRLLNEAFEQAVETTLIQPTFVTDYPVEISPLARPHRSKPGLVERFELFIVGREHANAFSELTDPVDQRQRLEAQQARKAAGDLEAQGLDEDFVMALEVGMPPTGGLGIGIDRLVMLLTDCPSIRDVIAFPLLRPESRKGEPPSVE.

The Mg(2+) site is built by glutamate 403 and glutamate 410.

It belongs to the class-II aminoacyl-tRNA synthetase family. Homodimer. It depends on Mg(2+) as a cofactor.

The protein localises to the cytoplasm. It carries out the reaction tRNA(Lys) + L-lysine + ATP = L-lysyl-tRNA(Lys) + AMP + diphosphate. This chain is Lysine--tRNA ligase, found in Synechococcus sp. (strain CC9605).